The sequence spans 112 residues: Large ribosomal subunit protein eL22 (112 aa).

The protein belongs to the eukaryotic ribosomal protein eL22 family. In terms of assembly, component of the large ribosomal subunit.

Its subcellular location is the cytoplasm. The protein is Large ribosomal subunit protein eL22 (RPL22) of Encephalitozoon cuniculi (strain GB-M1) (Microsporidian parasite).